The following is a 179-amino-acid chain: 3-hydroxyanthranilate 3,4-dioxygenase (179 aa).

R47 contacts O2. 3 residues coordinate Fe cation: H51, E57, and H96. Residue E57 coordinates substrate. R100 and E110 together coordinate substrate. The Fe cation site is built by C125, C128, C162, and C165.

Belongs to the 3-HAO family. Fe(2+) is required as a cofactor.

The enzyme catalyses 3-hydroxyanthranilate + O2 = (2Z,4Z)-2-amino-3-carboxymuconate 6-semialdehyde. It participates in cofactor biosynthesis; NAD(+) biosynthesis; quinolinate from L-kynurenine: step 3/3. In terms of biological role, catalyzes the oxidative ring opening of 3-hydroxyanthranilate to 2-amino-3-carboxymuconate semialdehyde, which spontaneously cyclizes to quinolinate. The polypeptide is 3-hydroxyanthranilate 3,4-dioxygenase (Bacillus thuringiensis (strain Al Hakam)).